The following is a 307-amino-acid chain: Cyclin-dependent kinase 5 activator 1 (307 aa).

Residue Ser-8 is modified to Phosphoserine; by CDK5. Residues 96–136 (STFAQPPPAQPPAPPANQLSGSQTGVSSSVKKAPHPSVTSA) are disordered. Residues 100–110 (QPPPAQPPAPP) show a composition bias toward pro residues. Residues 112–125 (NQLSGSQTGVSSSV) are compositionally biased toward polar residues. Residue Thr-138 is modified to Phosphothreonine; by CDK5.

It belongs to the cyclin-dependent kinase 5 activator family. Heterodimer composed of a catalytic subunit CDK5 and a regulatory subunit CDK5R1 (p25) and macromolecular complex composed of at least CDK5, CDK5R1 (p35) and CDK5RAP1 or CDK5RAP2 or CDK5RAP3. Only the heterodimer shows kinase activity. Interacts with EPHA4 and NGEF; may mediate the activation of NGEF by EPHA4. Interacts with RASGRF2. The complex p35/CDK5 interacts with CLOCK. In terms of processing, the p35 form is proteolytically cleaved by calpain, giving rise to the p25 form. P35 has a 5 to 10 fold shorter half-life compared to p25. The conversion results in deregulation of the CDK5 kinase: p25/CDK5 kinase displays an increased and altered tau phosphorylation in comparison to the p35/CDK5 kinase in vivo. Myristoylated. A proper myristoylation signal is essential for the proper distribution of p35. Post-translationally, phosphorylation at Ser-8 and Thr-138 by CDK5 prevents calpain-mediated proteolysis. In terms of processing, ubiquitinated, leading to its degradation: degradation of p35 by proteasome results in down-regulation of CDK5 activity. During this process, CDK5 phosphorylates p35 and induces its ubiquitination and subsequent degradation. Ubiquitinated by the CRL2(FEM1B) complex, which recognizes the -Gly-Leu-Asp-Arg C-degron at the C-terminus, leading to its degradation. Brain and neuron specific.

It is found in the cell membrane. The protein resides in the cell projection. Its subcellular location is the neuron projection. The protein localises to the nucleus. It localises to the cytoplasm. It is found in the perinuclear region. The protein resides in the perikaryon. Its function is as follows. p35 is a neuron specific activator of CDK5. The complex p35/CDK5 is required for neurite outgrowth and cortical lamination. Involved in dendritic spine morphogenesis by mediating the EFNA1-EPHA4 signaling. Activator of TPKII. The complex p35/CDK5 participates in the regulation of the circadian clock by modulating the function of CLOCK protein: phosphorylates CLOCK at 'Thr-451' and 'Thr-461' and regulates the transcriptional activity of the CLOCK-BMAL1 heterodimer in association with altered stability and subcellular distribution. This Spermophilus citellus (European ground squirrel) protein is Cyclin-dependent kinase 5 activator 1 (CDK5R1).